The chain runs to 852 residues: Metastasis-associated in colon cancer protein 1 (852 aa).

Ser-19 carries the post-translational modification Phosphoserine. Residues 212 to 349 (VTIACKVNHQ…LSQVMYLVVA (138 aa)) enclose the ZU5 domain. Positions 549–619 (NFSNYGVTLK…HCKNVKVISK (71 aa)) constitute an SH3 domain.

In terms of assembly, interacts with FASLG. Preferentially expressed in metastasizing tumors.

It is found in the cytoplasm. The protein resides in the nucleus. Its function is as follows. Acts as a transcription activator for MET and as a key regulator of HGF-MET signaling. Promotes cell motility, proliferation and hepatocyte growth factor (HGF)-dependent scattering in vitro and tumor growth and metastasis in vivo. The sequence is that of Metastasis-associated in colon cancer protein 1 (MACC1) from Homo sapiens (Human).